We begin with the raw amino-acid sequence, 155 residues long: Arginine repressor (155 aa).

It belongs to the ArgR family.

It localises to the cytoplasm. The protein operates within amino-acid biosynthesis; L-arginine biosynthesis [regulation]. Functionally, regulates arginine biosynthesis genes. This is Arginine repressor from Histophilus somni (strain 129Pt) (Haemophilus somnus).